Consider the following 734-residue polypeptide: MEQKEFDIKNILLKIEKDKNETSKKIQEKYKDCTIEDLEKSLRIQNKKSEEITFISKKIEELNEKLIVEKYKPLLSSSNNSNEIENEISPKIKEILIKNSILKNENSAVSPSITTTDASASLSFGGKTIVLPSNQPTTLRKSDAPADTKHIKLEITNDNKINIIWQDAKNYQSKDWVALYNYKYAPPDGYVNNTWYWAGNKTSGKVETGVTYDANRTQQVRYYNYQNELISQYTVESQCWIDIHGDLGSGLQVNWPNYSTSGSNDIIAIHNSNFGEPKDLANSIEQCYANKNDGDWVSEIINCGLPYYAVYWSNIGGGNYIKQACSKPMTPVDRKLAIGEYYNGEDSYNTSVAAFYDSRANDDKDYIMVTLKEVDQPGTPGYNAKAANGIVLSSNHSSYNDTLYFWGTYCSFDNETGKFYIRQKSCALEYRKWITDNYSKLKDRKVRNLVLPGSHDSATYFINSLSPKSPDADHYKYPDYLLTPWSKTQTCSVYKQLCFGVRYFDLRVARLKDKLYIIHNFYSDSVKQVLKDILQYVSENVNEVIILHWSHLYLVDEDNKLLMKMIIEILGKFMSNSNKGPDVKVGDLAGTPIICIYDDLVNPLSNGGAGGNGKRPDIRDPRLWDPSCISSPYETSRYHSFESILKFLKSRINVPKRKVLHVCQAILTIEFSYEFFGHDLITWTVEHRNKFNEFFNDLETFASPTNIIMTDFVTFYPLSSYCIRRNTLEFNNSN.

The stretch at isoleucine 8 to lysine 70 forms a coiled coil. The PI-PLC X-box domain maps to lysine 440–leucine 604.

The polypeptide is PI-PLC X-box domain-containing protein DDB_G0293730 (Dictyostelium discoideum (Social amoeba)).